The following is a 719-amino-acid chain: Nucleolar complex protein 2 homolog (719 aa).

Over residues 1–24 the composition is skewed to basic residues; the sequence is MKLLKKSSSLKKGVTKRAKLQKKP. Disordered stretches follow at residues 1–67, 86–136, and 643–719; these read MKLL…GMKK, LQQE…TKIK, and ALEN…SDED. Basic and acidic residues predominate over residues 25–42; it reads PSKDEASSSDEELAKLDG. The segment covering 89-130 has biased composition (acidic residues); the sequence is EDADLLNMEEDEDDDEEGEDNEDEEDEEEEEESDEDDDEEDD. The span at 643 to 661 shows a compositional bias: basic and acidic residues; that stretch reads ALENSKKDDKKKKKEEEAA.

The protein belongs to the NOC2 family.

The protein localises to the nucleus. Required for normal somatic gonad development and for regulation of germline development and proliferation. The chain is Nucleolar complex protein 2 homolog (pro-2) from Caenorhabditis briggsae.